A 1304-amino-acid chain; its full sequence is Splicing factor 3B subunit 1 (1304 aa).

Disordered regions lie at residues 100–119 (QYDP…EDEY) and 124–148 (RTMI…PKMN). Positions 104-119 (FAEHRPPKIADREDEY) are enriched in basic and acidic residues. Residue T125 is modified to Phosphothreonine. S129 bears the Phosphoserine mark. K141 bears the N6-acetyllysine mark. T142 bears the Phosphothreonine mark. R157 bears the Citrulline mark. The disordered stretch occupies residues 172-360 (LAEKAKAGEL…PVLTPGKTPI (189 aa)). At S194 the chain carries Phosphoserine. A phosphothreonine mark is found at T203, T207, and T211. An N6-acetyllysine; alternate modification is found at K214. A Glycyl lysine isopeptide (Lys-Gly) (interchain with G-Cter in SUMO2); alternate cross-link involves residue K214. 2 positions are modified to phosphothreonine: T223 and T227. Positions 223–491 (TPGHTPSLRW…VDESTLSPEE (269 aa)) are interaction with PPP1R8. S229 carries the post-translational modification Phosphoserine. Basic and acidic residues predominate over residues 231 to 241 (RWDETPGRAKG). A phosphothreonine mark is found at T235, T244, T248, T257, T261, T267, T273, and T278. Residue S287 is modified to Phosphoserine. Residues 291–304 (NRWDETPKTERDTP) show a composition bias toward basic and acidic residues. Phosphothreonine is present on residues T296, T299, T303, and T313. S322 carries the phosphoserine modification. T326 and T328 each carry phosphothreonine. S332 carries the phosphoserine modification. T341 is subject to Phosphothreonine. Residues 342-352 (PASQMGGSTPV) are compositionally biased toward polar residues. S344 and S349 each carry phosphoserine. A phosphothreonine mark is found at T350 and T354. At S400 the chain carries Phosphoserine. K413 participates in a covalent cross-link: Glycyl lysine isopeptide (Lys-Gly) (interchain with G-Cter in SUMO2); alternate. K413 is covalently cross-linked (Glycyl lysine isopeptide (Lys-Gly) (interchain with G-Cter in SUMO1); alternate). T426 carries the phosphothreonine modification. K430 participates in a covalent cross-link: Glycyl lysine isopeptide (Lys-Gly) (interchain with G-Cter in SUMO2). T434 carries the post-translational modification Phosphothreonine; by DYRK1A. T436 carries the phosphothreonine modification. A Phosphoserine modification is found at S488. HEAT repeat units lie at residues 529-568 (GPLF…DLVR), 569-603 (PYVH…LAKA), 604-641 (AGLA…ALGI), 643-677 (SLLP…LMGC), 680-718 (LPHL…AATP), 763-801 (NYYT…TDGV), 843-881 (KVGA…NLGA), 1010-1048 (TPPI…RGAE), 1052-1090 (AREW…AIGP), 1122-1160 (TCSP…YIGE), and 1163-1201 (KDYI…GVYG). The interaction with PHF5A stretch occupies residues 547–550 (QERH). K554 and K562 each carry N6-acetyllysine. Residues 1156-1157 (EY) form an interaction with PHF5A region. The interaction with SF3B3 and SF3B5 stretch occupies residues 1248 to 1304 (QYCLQGLFHPARKVRDVYWKIYNSIYIGSQDALIAHYPRIYNDDKNTYIRYDLDYIL).

Belongs to the SF3B1 family. In terms of assembly, component of the 17S U2 SnRNP complex, a ribonucleoprotein complex that contains small nuclear RNA (snRNA) U2 and a number of specific proteins. Part of the SF3B subcomplex of the 17S U2 SnRNP complex. SF3B associates with the splicing subcomplex SF3A and a 12S RNA unit to form the U2 small nuclear ribonucleoproteins complex (U2 snRNP). Within the SF3B complex, interacts directly (via HEAT domain) with SF3B3, SF3B5, SF3B6 and (via HEAT domain) with PHF5A. The SF3B subcomplex interacts with U2AF2. Identified in the spliceosome C complex. Component of the minor (U12-type spliceosome) spliceosome. Within the minor spliceosome complex, interacts with SCNM1 and CRIPT. Component of the B-WICH complex, at least composed of SMARCA5/SNF2H, BAZ1B/WSTF, SF3B1, DEK, MYO1C, ERCC6, MYBBP1A and DDX21. Phosphorylated form interacts with PPP1R8. Interacts with PQBP1. Interacts with RBM17. Interacts with RBM39. Interacts with SETX. Interacts with RBM15. Interacts with USH1G. Interacts with SDE2. Interacts with U2AF1. Interacts with CACTIN. Interacts with ZRSR1. Interacts with CYREN. Phosphorylated. Phosphorylation occurs concomitantly with the splicing catalytic steps. Phosphorylation on Thr-244, Thr-248 and Thr-313 by cyclin-dependent kinases promotes interaction with PPP1R8 during mitosis. In terms of processing, citrullinated by PADI4. In terms of tissue distribution, ubiquitous.

The protein localises to the nucleus. It localises to the nucleus speckle. Its function is as follows. Component of the 17S U2 SnRNP complex of the spliceosome, a large ribonucleoprotein complex that removes introns from transcribed pre-mRNAs. The 17S U2 SnRNP complex (1) directly participates in early spliceosome assembly and (2) mediates recognition of the intron branch site during pre-mRNA splicing by promoting the selection of the pre-mRNA branch-site adenosine, the nucleophile for the first step of splicing. Within the 17S U2 SnRNP complex, SF3B1 is part of the SF3B subcomplex, which is required for 'A' complex assembly formed by the stable binding of U2 snRNP to the branchpoint sequence in pre-mRNA. Sequence independent binding of SF3A and SF3B subcomplexes upstream of the branch site is essential, it may anchor U2 snRNP to the pre-mRNA. May also be involved in the assembly of the 'E' complex. Also acts as a component of the minor spliceosome, which is involved in the splicing of U12-type introns in pre-mRNAs. Together with other U2 snRNP complex components may also play a role in the selective processing of microRNAs (miRNAs) from the long primary miRNA transcript, pri-miR-17-92. This chain is Splicing factor 3B subunit 1, found in Mus musculus (Mouse).